Reading from the N-terminus, the 350-residue chain is Neurogenic differentiation factor 1 (350 aa).

A disordered region spans residues 1-91 (MTKSYSEESM…KKKKMTKARM (91 aa)). Positions 7 to 18 (EESMMLESQSSS) are enriched in low complexity. Over residues 22–38 (DKCHSSSQDERDVDKTS) the composition is skewed to basic and acidic residues. Acidic residues predominate over residues 44–72 (DMEDDDDAGLNRLEDEDDEEEEEEEEDGD). Residues 76–91 (PKRRGPKKKKMTKARM) show a composition bias toward basic residues. Positions 82–88 (KKKKMTK) match the Nuclear localization signal motif. In terms of domain architecture, bHLH spans 96–148 (MRRMKANARERNRMHGLNDALESLRKVVPCYSKTQKLSKIETLRLAKNYIWAL).

In terms of assembly, efficient DNA binding requires dimerization with another bHLH protein. In terms of tissue distribution, in the embryo, expressed broadly in a subset of primary neurons in the brain and spinal cord. At 28 hours post-fertilization (hpf), regions of expression include telencephalon, olfactory placode, epiphysis, cranial ganglia, acoustic ganglia, Rohon-Beard mechano-sensory neurons and motoneurons. In 2 day postembryonic brain, expressed in many brain regions but absent from subpallium, the ventral preoptic region, ventral thalamus and hypothalamus; sites of expression extend laterally from the ventricular proliferative regions and correspond to freshly determined cell populations. In adult, expressed in all tissues examined with highest levels in brain.

The protein localises to the cytoplasm. The protein resides in the nucleus. Functionally, may act as a transcriptional activator. Differentiation factor required for neurogenesis. Acts as an upstream activator of isl1. This is Neurogenic differentiation factor 1 from Danio rerio (Zebrafish).